Consider the following 183-residue polypeptide: Bifunctional protein PyrR (183 aa).

The PRPP-binding signature appears at 100-112 (VILVDDVLYTGRT).

The protein belongs to the purine/pyrimidine phosphoribosyltransferase family. PyrR subfamily.

It catalyses the reaction UMP + diphosphate = 5-phospho-alpha-D-ribose 1-diphosphate + uracil. In terms of biological role, regulates the transcription of the pyrimidine nucleotide (pyr) operon in response to exogenous pyrimidines. Functionally, also displays a weak uracil phosphoribosyltransferase activity which is not physiologically significant. The chain is Bifunctional protein PyrR from Deinococcus deserti (strain DSM 17065 / CIP 109153 / LMG 22923 / VCD115).